The sequence spans 142 residues: NTF2-related export protein 2 (142 aa).

The NTF2 domain maps to 17-136; sequence AAEEFVNIYY…WKIASDCFRF (120 aa).

As to quaternary structure, associates with NXF1, NXF2, NXF3 and NXF5.

It is found in the nucleus. The protein localises to the cytoplasm. In terms of biological role, regulator of protein export for NES-containing proteins. Also plays a role in mRNA nuclear export. This Bos taurus (Bovine) protein is NTF2-related export protein 2 (NXT2).